The sequence spans 252 residues: Triosephosphate isomerase (252 aa).

10–12 (NWK) serves as a coordination point for substrate. The Electrophile role is filled by His96. Catalysis depends on Glu168, which acts as the Proton acceptor. Substrate-binding positions include Gly174, Ser214, and 235–236 (GG).

This sequence belongs to the triosephosphate isomerase family. Homodimer.

The protein resides in the cytoplasm. It catalyses the reaction D-glyceraldehyde 3-phosphate = dihydroxyacetone phosphate. Its pathway is carbohydrate biosynthesis; gluconeogenesis. It functions in the pathway carbohydrate degradation; glycolysis; D-glyceraldehyde 3-phosphate from glycerone phosphate: step 1/1. Its function is as follows. Seems to be capable of enhancing bacteriocin synthesis. In terms of biological role, involved in the gluconeogenesis. Catalyzes stereospecifically the conversion of dihydroxyacetone phosphate (DHAP) to D-glyceraldehyde-3-phosphate (G3P). This Lactobacillus delbrueckii subsp. lactis protein is Triosephosphate isomerase.